Reading from the N-terminus, the 180-residue chain is Large ribosomal subunit protein uL6 (180 aa).

The protein belongs to the universal ribosomal protein uL6 family. As to quaternary structure, part of the 50S ribosomal subunit.

Functionally, this protein binds to the 23S rRNA, and is important in its secondary structure. It is located near the subunit interface in the base of the L7/L12 stalk, and near the tRNA binding site of the peptidyltransferase center. The chain is Large ribosomal subunit protein uL6 from Clostridium botulinum (strain Eklund 17B / Type B).